A 508-amino-acid chain; its full sequence is Anthranilate synthase component 1 (508 aa).

L-tryptophan-binding positions include serine 49 and 282–284 (PYM). 317 to 318 (GT) serves as a coordination point for chorismate. Glutamate 344 is a binding site for Mg(2+). Chorismate is bound by residues tyrosine 432, arginine 452, 466-468 (GAG), and glycine 468. Glutamate 481 is a binding site for Mg(2+).

The protein belongs to the anthranilate synthase component I family. In terms of assembly, heterotetramer consisting of two non-identical subunits: a beta subunit (TrpG) and a large alpha subunit (TrpE). Requires Mg(2+) as cofactor.

The enzyme catalyses chorismate + L-glutamine = anthranilate + pyruvate + L-glutamate + H(+). Its pathway is amino-acid biosynthesis; L-tryptophan biosynthesis; L-tryptophan from chorismate: step 1/5. Its activity is regulated as follows. Feedback inhibited by tryptophan. Its function is as follows. Part of a heterotetrameric complex that catalyzes the two-step biosynthesis of anthranilate, an intermediate in the biosynthesis of L-tryptophan. In the first step, the glutamine-binding beta subunit (TrpG) of anthranilate synthase (AS) provides the glutamine amidotransferase activity which generates ammonia as a substrate that, along with chorismate, is used in the second step, catalyzed by the large alpha subunit of AS (TrpE) to produce anthranilate. In the absence of TrpG, TrpE can synthesize anthranilate directly from chorismate and high concentrations of ammonia. This chain is Anthranilate synthase component 1 (trpE), found in Bacillus caldotenax.